The chain runs to 449 residues: Phosphoglucosamine mutase (449 aa).

S104 serves as the catalytic Phosphoserine intermediate. Residues S104, D243, D245, and D247 each coordinate Mg(2+). Residue S104 is modified to Phosphoserine.

This sequence belongs to the phosphohexose mutase family. It depends on Mg(2+) as a cofactor. In terms of processing, activated by phosphorylation.

It carries out the reaction alpha-D-glucosamine 1-phosphate = D-glucosamine 6-phosphate. Catalyzes the conversion of glucosamine-6-phosphate to glucosamine-1-phosphate. This chain is Phosphoglucosamine mutase, found in Xanthomonas campestris pv. campestris (strain 8004).